We begin with the raw amino-acid sequence, 358 residues long: uncharacterized protein (358 aa).

It belongs to the SMP-30/CGR1 family.

This is an uncharacterized protein from Saccharomyces cerevisiae (strain ATCC 204508 / S288c) (Baker's yeast).